The primary structure comprises 443 residues: Pyrrolysine--tRNA ligase (443 aa).

The disordered stretch occupies residues 103–177; it reads VRKAMPKSVA…PAAPVPTSAP (75 aa). Over residues 131–177 the composition is skewed to low complexity; that stretch reads PAPATPVSAPAQAPAPSTGSASATSASAQRMANSAAAPAAPVPTSAP.

This sequence belongs to the class-II aminoacyl-tRNA synthetase family.

It is found in the cytoplasm. The catalysed reaction is tRNA(Pyl) + L-pyrrolysine + ATP = L-pyrrolysyl-tRNA(Pyl) + AMP + diphosphate. Functionally, catalyzes the attachment of pyrrolysine to tRNA(Pyl). Pyrrolysine is a lysine derivative encoded by the termination codon UAG. This Methanosarcina acetivorans (strain ATCC 35395 / DSM 2834 / JCM 12185 / C2A) protein is Pyrrolysine--tRNA ligase.